Here is a 372-residue protein sequence, read N- to C-terminus: Oxidoreductase ptaL (372 aa).

The signal sequence occupies residues 1–16 (MKHIVIIGGGFAGVST). 6-hydroxy-FAD-binding positions include 8–12 (GGGFA) and arginine 51. The N-linked (GlcNAc...) asparagine glycan is linked to asparagine 251. Aspartate 285 serves as a coordination point for 6-hydroxy-FAD.

The protein belongs to the FAD-dependent oxidoreductase family. It depends on 6-hydroxy-FAD as a cofactor.

Its pathway is secondary metabolite biosynthesis. Functionally, oxidoreductase; part of the gene cluster that mediates the biosynthesis of pestheic acid, a diphenyl ether which is a biosynthetic precursor of the unique chloropupukeananes. The biosynthesis initiates from condensation of acetate and malonate units catalyzed by the non-reducing PKS ptaA. As the ptaA protein is TE/CLC domain-deficient, hydrolysis and Claisen cyclization of the polyketide could be catalyzed by ptaB containing a beta-lactamase domain. The ptaB protein might hydrolyze the thioester bond between the ACP of ptaA and the intermediate to release atrochrysone carboxylic acid, which is spontaneously dehydrated to form endocrocin anthrone. Endocrocin anthrone is then converted to endocrocin, catalyzed by the anthrone oxygenase ptaC. Spontaneous decarboxylation of endocrocin occurs to generate emodin. An O-methyltransferase (ptaH or ptaI) could methylate emodin to form physcion. PtaJ could then catalyze the oxidative cleavage of physcion, and rotation of the intermediate could then afford desmethylisosulochrin. PtaF, a putative NADH-dependent oxidoreductase, might also participate in the oxidative cleavage step. Desmethylisosulochrin is then transformed by another O-methyltransferase (ptaH or ptaI) to form isosulochrin. Chlorination of isosulochrin by ptaM in the cyclohexadienone B ring then produces chloroisosulochrin. PtaE is responsible for the oxidative coupling reactions of both benzophenones isosulochrin and chloroisosulochrin to RES-1214-1 and pestheic acid respectively, regardless of chlorination. The polypeptide is Oxidoreductase ptaL (Pestalotiopsis fici (strain W106-1 / CGMCC3.15140)).